The chain runs to 319 residues: Thymidylate synthase (319 aa).

DUMP-binding positions include R25 and 181 to 182 (RR). Catalysis depends on C201, which acts as the Nucleophile. Residues 221-224 (RSAD), N232, and 262-264 (HIY) contribute to the dUMP site. Residue D224 coordinates (6R)-5,10-methylene-5,6,7,8-tetrahydrofolate. (6R)-5,10-methylene-5,6,7,8-tetrahydrofolate is bound at residue A318.

The protein belongs to the thymidylate synthase family. Bacterial-type ThyA subfamily. Homodimer.

The protein localises to the cytoplasm. The enzyme catalyses dUMP + (6R)-5,10-methylene-5,6,7,8-tetrahydrofolate = 7,8-dihydrofolate + dTMP. It participates in pyrimidine metabolism; dTTP biosynthesis. Catalyzes the reductive methylation of 2'-deoxyuridine-5'-monophosphate (dUMP) to 2'-deoxythymidine-5'-monophosphate (dTMP) while utilizing 5,10-methylenetetrahydrofolate (mTHF) as the methyl donor and reductant in the reaction, yielding dihydrofolate (DHF) as a by-product. This enzymatic reaction provides an intracellular de novo source of dTMP, an essential precursor for DNA biosynthesis. This chain is Thymidylate synthase, found in Oenococcus oeni (strain ATCC BAA-331 / PSU-1).